The following is a 1412-amino-acid chain: DNA-directed RNA polymerase subunit beta' (1412 aa).

Residues D543, D545, and D547 each contribute to the Mg(2+) site. Zn(2+) is bound by residues C1017, C1092, C1099, and C1102.

It belongs to the RNA polymerase beta' chain family. As to quaternary structure, the RNAP catalytic core consists of 2 alpha, 1 beta, 1 beta' and 1 omega subunit. When a sigma factor is associated with the core the holoenzyme is formed, which can initiate transcription. Mg(2+) serves as cofactor. Requires Zn(2+) as cofactor.

It catalyses the reaction RNA(n) + a ribonucleoside 5'-triphosphate = RNA(n+1) + diphosphate. Functionally, DNA-dependent RNA polymerase catalyzes the transcription of DNA into RNA using the four ribonucleoside triphosphates as substrates. This Mesomycoplasma hyopneumoniae (strain 232) (Mycoplasma hyopneumoniae) protein is DNA-directed RNA polymerase subunit beta'.